Reading from the N-terminus, the 92-residue chain is Protamine-2 (92 aa).

Positions 1-76 are disordered; sequence MVRCRVRSPS…RRACRHRRHR (76 aa). The segment covering 7–20 has biased composition (low complexity); sequence RSPSESPQQGSGQQ. Phosphoserine occurs at positions 8 and 10. A compositionally biased stretch (basic and acidic residues) spans 21-36; sequence RENERQDQDQELRPED. Residues 42 to 76 are compositionally biased toward basic residues; sequence RTHRGRYHYRHRSHTRRRRSCRRRRRRACRHRRHR.

It belongs to the protamine P2 family. Interacts with TDRP. Post-translationally, proteolytic processing into mature chains is required for histone eviction during spermatogenesis. Transition proteins (TNP1 and TNP2) are required for processing. In terms of tissue distribution, testis.

The protein localises to the nucleus. It is found in the chromosome. Its function is as follows. Protamines substitute for histones in the chromatin of sperm during the haploid phase of spermatogenesis. They compact sperm DNA into a highly condensed, stable and inactive complex. This Sus scrofa (Pig) protein is Protamine-2 (PRM2).